The primary structure comprises 239 residues: MTRDEARAKIIFALDVNEFSDVEKWADLLSPHVGMFKVGKQLYTACGPAVVRMIQKYGGEVFLDLKYHDIPNTVAMASLEAARMGVKLFNLHALGGYEMMAKTVETLDKEFKGEERGKVLAVTILTSSNEQTLQEVGINLPVPEMVVKLAALAKKAGIDGVVASPQEVPLIREACGNDFLIVTPGVRPAFAAADDQKRIMTPAEAVKSGADYLVIGRPIAAAPNPAEAAQAIVAEIVAG.

Substrate-binding positions include aspartate 15, lysine 37, aspartate 64–threonine 73, threonine 126, arginine 187, glutamine 196, glycine 216, and arginine 217. Lysine 66 (proton donor) is an active-site residue.

Belongs to the OMP decarboxylase family. Type 1 subfamily. In terms of assembly, homodimer.

The enzyme catalyses orotidine 5'-phosphate + H(+) = UMP + CO2. The protein operates within pyrimidine metabolism; UMP biosynthesis via de novo pathway; UMP from orotate: step 2/2. Its function is as follows. Catalyzes the decarboxylation of orotidine 5'-monophosphate (OMP) to uridine 5'-monophosphate (UMP). This chain is Orotidine 5'-phosphate decarboxylase, found in Geotalea daltonii (strain DSM 22248 / JCM 15807 / FRC-32) (Geobacter daltonii).